A 204-amino-acid chain; its full sequence is Phosphoribosyl-dephospho-CoA transferase (204 aa).

Active-site residues include Asp129 and Asp131.

The protein belongs to the MdcG family.

It catalyses the reaction apo-[malonate decarboxylase ACP] + 2'-(5''-triphospho-alpha-D-ribosyl)-3'-dephospho-CoA = holo-[malonate decarboxylase ACP] + diphosphate. Functionally, transfers 2'-(5-triphosphoribosyl)-3'-dephosphocoenzyme-A to the apo-[acyl-carrier-protein] of the malonate decarboxylase to yield holo-[acyl-carrier-protein]. The sequence is that of Phosphoribosyl-dephospho-CoA transferase from Pseudomonas putida (Arthrobacter siderocapsulatus).